We begin with the raw amino-acid sequence, 426 residues long: D-tagatose-1,6-bisphosphate aldolase subunit KbaZ (426 aa).

The protein belongs to the GatZ/KbaZ family. KbaZ subfamily. As to quaternary structure, forms a complex with KbaY.

It functions in the pathway carbohydrate metabolism; D-tagatose 6-phosphate degradation; D-glyceraldehyde 3-phosphate and glycerone phosphate from D-tagatose 6-phosphate: step 2/2. Functionally, component of the tagatose-1,6-bisphosphate aldolase KbaYZ that is required for full activity and stability of the Y subunit. Could have a chaperone-like function for the proper and stable folding of KbaY. When expressed alone, KbaZ does not show any aldolase activity. This is D-tagatose-1,6-bisphosphate aldolase subunit KbaZ from Escherichia coli O7:K1 (strain IAI39 / ExPEC).